We begin with the raw amino-acid sequence, 316 residues long: tRNA dimethylallyltransferase (316 aa).

17 to 24 contributes to the ATP binding site; that stretch reads GPTASGKT. 19–24 lines the substrate pocket; the sequence is TASGKT. 4 interaction with substrate tRNA regions span residues 42 to 45, 166 to 170, 247 to 252, and 280 to 287; these read DSAL, QRLSR, RCVGYR, and KRQITWLR.

Belongs to the IPP transferase family. In terms of assembly, monomer. Mg(2+) is required as a cofactor.

The catalysed reaction is adenosine(37) in tRNA + dimethylallyl diphosphate = N(6)-dimethylallyladenosine(37) in tRNA + diphosphate. Functionally, catalyzes the transfer of a dimethylallyl group onto the adenine at position 37 in tRNAs that read codons beginning with uridine, leading to the formation of N6-(dimethylallyl)adenosine (i(6)A). This is tRNA dimethylallyltransferase from Shigella dysenteriae serotype 1 (strain Sd197).